Reading from the N-terminus, the 198-residue chain is Imidazoleglycerol-phosphate dehydratase (198 aa).

The protein belongs to the imidazoleglycerol-phosphate dehydratase family.

It localises to the cytoplasm. It carries out the reaction D-erythro-1-(imidazol-4-yl)glycerol 3-phosphate = 3-(imidazol-4-yl)-2-oxopropyl phosphate + H2O. It functions in the pathway amino-acid biosynthesis; L-histidine biosynthesis; L-histidine from 5-phospho-alpha-D-ribose 1-diphosphate: step 6/9. The protein is Imidazoleglycerol-phosphate dehydratase of Magnetococcus marinus (strain ATCC BAA-1437 / JCM 17883 / MC-1).